A 165-amino-acid polypeptide reads, in one-letter code: Anterior gradient protein 3 (165 aa).

Positions 1 to 20 (MLHSALALCLLLITVSSNLA) are cleaved as a signal peptide. The short motif at 162-165 (QSEL) is the Prevents secretion from ER element.

This sequence belongs to the AGR family. As to quaternary structure, interacts with LYPD3 and DAG1 (alphaDAG1). In terms of tissue distribution, expressed in the ciliated cells of the airway epithelium. Not detected in the mucous cells.

The protein localises to the endoplasmic reticulum. Its subcellular location is the cytoplasm. In terms of biological role, required for calcium-mediated regulation of ciliary beat frequency and mucociliary clearance in the airway. Might be involved in the regulation of intracellular calcium in tracheal epithelial cells. The sequence is that of Anterior gradient protein 3 from Mus musculus (Mouse).